The following is a 336-amino-acid chain: Small ribosomal subunit protein uS2 (336 aa).

This sequence belongs to the universal ribosomal protein uS2 family.

The sequence is that of Small ribosomal subunit protein uS2 from Beijerinckia indica subsp. indica (strain ATCC 9039 / DSM 1715 / NCIMB 8712).